A 302-amino-acid polypeptide reads, in one-letter code: MSHTAEIPMVPGSESPLELKPLKAVDPKAVYHRRAQRLLSLAKDSPLADYFELCRRVVAIQARLAAEADFGQLLAWGKDEAIPLSHLGSEADSYWQGLLQQLLSDLLPQVGEDLARVLRLLMQQSPEQLTSWGASLRQGHMSAVPARFSLFIWAAMGVYWSHWAPMVIKRIDQRKVAQQNLCPICGSHPVASVIVDQPRAGLRYLHCSLCESEWHYIRAHCTSCGQDKGTTLWSFDDTQAQVRIESCDECHGYTKMMFVEKSPLMDVVADDLATLMLDSELNAKGFGATTVNPLLLAHETEQ.

It belongs to the FdhE family.

Its subcellular location is the cytoplasm. Necessary for formate dehydrogenase activity. The chain is Protein FdhE homolog from Shewanella oneidensis (strain ATCC 700550 / JCM 31522 / CIP 106686 / LMG 19005 / NCIMB 14063 / MR-1).